Here is a 234-residue protein sequence, read N- to C-terminus: BTB/POZ domain-containing protein KCTD5 (234 aa).

Ala-2 bears the N-acetylalanine mark. The BTB domain maps to 44–146 (KWVRLNVGGT…LVKDKIRERD (103 aa)). Residues 213–234 (PYGTTSEPSEKAKILQERGSRM) form a disordered region. Positions 220 to 234 (PSEKAKILQERGSRM) are enriched in basic and acidic residues.

In terms of assembly, homopentamer. Interacts (via C-terminus) with GRASP55/GORASP2. Interacts with CUL3 and with ubiquitinated proteins. Interacts with CRY1.

It localises to the cytoplasm. Its subcellular location is the cytosol. The protein localises to the nucleus. Functionally, its interaction with CUL3 suggests that it may act as a substrate adapter in some E3 ligase complex. Does not affect the function of Kv channel Kv2.1/KCNB1, Kv1.2/KCNA2, Kv4.2/KCND2 and Kv3.4/KCNC4. This is BTB/POZ domain-containing protein KCTD5 (Kctd5) from Rattus norvegicus (Rat).